The sequence spans 438 residues: UPF0229 protein NGR_c12350 (438 aa).

Positions 1 to 16 (MPNFIDRRLNPKDKSL) are enriched in basic and acidic residues. Disordered regions lie at residues 1-20 (MPNF…GNRQ) and 83-107 (FAAG…GTGQ). Over residues 94-105 (SGGGATGAGAGT) the composition is skewed to gly residues.

Belongs to the UPF0229 family.

This is UPF0229 protein NGR_c12350 from Sinorhizobium fredii (strain NBRC 101917 / NGR234).